The chain runs to 639 residues: MDRVLLRWISLFWLTAMVEGLQVTVPDKKKVAMLFQPTVLRCHFSTSSHQPAVVQWKFKSYCQDRMGESLGMSSTRAQSLSKRNLEWDPYLDCLDSRRTVRVVASKQGSTVTLGDFYRGREITIVHDADLQIGKLMWGDSGLYYCIITTPDDLEGKNEDSVELLVLGRTGLLADLLPSFAVEIMPEWVFVGLVLLGVFLFFVLVGICWCQCCPHSCCCYVRCPCCPDSCCCPQALYEAGKAAKAGYPPSVSGVPGPYSIPSVPLGGAPSSGMLMDKPHPPPLAPSDSTGGSHSVRKGYRIQADKERDSMKVLYYVEKELAQFDPARRMRGRYNNTISELSSLHEEDSNFRQSFHQMRSKQFPVSGDLESNPDYWSGVMGGSSGASRGPSAMEYNKEDRESFRHSQPRSKSEMLSRKNFATGVPAVSMDELAAFADSYGQRPRRADGNSHEARGGSRFERSESRAHSGFYQDDSLEEYYGQRSRSREPLTDADRGWAFSPARRRPAEDAHLPRLVSRTPGTAPKYDHSYLGSARERQARPEGASRGGSLETPSKRSAQLGPRSASYYAWSPPGTYKAGSSQDDQEDASDDALPPYSELELTRGPSYRGRDLPYHSNSEKKRKKEPAKKTNDFPTRMSLVV.

The first 20 residues, 1-20 (MDRVLLRWISLFWLTAMVEG), serve as a signal peptide directing secretion. An Ig-like V-type domain is found at 21–162 (LQVTVPDKKK…LEGKNEDSVE (142 aa)). Over 21–186 (LQVTVPDKKK…PSFAVEIMPE (166 aa)) the chain is Lumenal. A disulfide bridge connects residues C42 and C145. A helical transmembrane segment spans residues 187-207 (WVFVGLVLLGVFLFFVLVGIC). Residues 208 to 639 (WCQCCPHSCC…DFPTRMSLVV (432 aa)) are Cytoplasmic-facing. Disordered regions lie at residues 273 to 295 (LMDKPHPPPLAPSDSTGGSHSVR), 374 to 415 (WSGV…MLSR), and 437 to 639 (YGQR…SLVV). Basic and acidic residues-rich tracts occupy residues 393 to 414 (YNKEDRESFRHSQPRSKSEMLS) and 442 to 464 (RRADGNSHEARGGSRFERSESRA). A Phosphoserine modification is found at S473. The span at 483–493 (RSREPLTDADR) shows a compositional bias: basic and acidic residues. R544 carries the post-translational modification Omega-N-methylarginine. Phosphoserine is present on S579. The span at 606-617 (RGRDLPYHSNSE) shows a compositional bias: basic and acidic residues.

This sequence belongs to the immunoglobulin superfamily. LISCH7 family. Interacts with MARVELD2 and OCLN. Interacts with P4HB AND HSPA5; the interaction with HSPA5 stabilizes ILDR2 expression. Interacts (via C-terminus) with TRA2A, TRA2B and SRSF1. Expressed in testis, brain, pituitary, colon, heart, nerves, prostate, esophagus, lung liver and small intestine. Highly expressed in macrophages, also expressed in monocytes and at low levels in NK and NKT cells (at protein level).

The protein resides in the endoplasmic reticulum membrane. It localises to the cell junction. Its subcellular location is the tight junction. It is found in the nucleus. In terms of biological role, may be involved in ER stress pathways with effects on lipid homeostasis and insulin secretion. With ILDR1 and LSR, involved in the maintain of the epithelial barrier function through the recruitment of MARVELD2/tricellulin to tricellular tight junctions. Also functions as a B7-like protein family member expressed on immune cells and inflamed tissue and with T-cell inhibitory activity. In the inner ear, may regulate alternative pre-mRNA splicing via binding to TRA2A, TRA2B and SRSF1. This chain is Immunoglobulin-like domain-containing receptor 2, found in Homo sapiens (Human).